Reading from the N-terminus, the 202-residue chain is Peptide deformylase (202 aa).

Fe cation contacts are provided by Cys-121 and His-163. The active site involves Glu-164. His-167 contacts Fe cation.

The protein belongs to the polypeptide deformylase family. Fe(2+) serves as cofactor.

The catalysed reaction is N-terminal N-formyl-L-methionyl-[peptide] + H2O = N-terminal L-methionyl-[peptide] + formate. In terms of biological role, removes the formyl group from the N-terminal Met of newly synthesized proteins. Requires at least a dipeptide for an efficient rate of reaction. N-terminal L-methionine is a prerequisite for activity but the enzyme has broad specificity at other positions. In Synechococcus sp. (strain CC9311), this protein is Peptide deformylase.